The sequence spans 271 residues: Structure-specific endonuclease subunit slx1 (271 aa).

Residues 5–87 enclose the GIY-YIG domain; sequence NFYCCYLLKS…QNLGISRYTK (83 aa). An SLX1-type zinc finger spans residues 180 to 231; sequence CNLCYECIESDELRANCPFTDCNSINHLTCLASSFLTEECQVLPIEGMCTKC.

It belongs to the SLX1 family. As to quaternary structure, forms a heterodimer with slx4. Mg(2+) is required as a cofactor. Mn(2+) serves as cofactor.

It is found in the nucleus. The protein localises to the nucleolus. In terms of biological role, catalytic subunit of the slx1-slx4 structure-specific endonuclease that resolves DNA secondary structures generated during DNA repair and recombination. Has endonuclease activity towards branched DNA substrates, introducing single-strand cuts in duplex DNA close to junctions with ss-DNA. Has a preference for stem-loop (SL) and splayed arm Y structures. Introduces a single-strand cut in duplex DNA on the 3' side of a double-strand/single-strand junction with respect to the single-strand moving 3' to 5' away from the junction. Plays a critical role in maintaining the integrity of the ribosomal DNA (rDNA) loci, where it has a role in re-starting stalled replication forks. The complex initiates homologous recombination (HR) events, used to maintain rDNA copy number, in the rDNA repeats that are processed by a mechanism that requires rad22, but not rhp51. It is also required for suppression of methyl methanesulfonate (MMS) and UV-C irradiation hypersensitivity of the structural maintenance of chromosome (SMC) protein mutant, smc6-74, by overexpression of brc1. Has Holliday junction resolvase activity in vitro. The chain is Structure-specific endonuclease subunit slx1 from Schizosaccharomyces pombe (strain 972 / ATCC 24843) (Fission yeast).